The chain runs to 65 residues: Ferredoxin-1 (65 aa).

Positions 3 to 31 (RKFYVDQDECIACESCVEIAPGAFAMDPE) constitute a 4Fe-4S ferredoxin-type domain. Residues Cys12, Cys15, Cys18, and Cys55 each contribute to the [4Fe-4S] cluster site.

Homodimer. [4Fe-4S] cluster serves as cofactor.

Its function is as follows. Ferredoxins are iron-sulfur proteins that transfer electrons in a wide variety of metabolic reactions. This chain is Ferredoxin-1 (fd1), found in Desulfocurvibacter africanus (Desulfovibrio africanus).